A 146-amino-acid chain; its full sequence is Hemoglobin subunit beta (146 aa).

An N-acetylvaline modification is found at valine 1. Positions 2–146 constitute a Globin domain; it reads HLSGEEKACV…VANALAHKYH (145 aa). At threonine 12 the chain carries Phosphothreonine. Serine 44 is subject to Phosphoserine. At lysine 59 the chain carries N6-acetyllysine. Histidine 63 provides a ligand contact to heme b. N6-acetyllysine is present on lysine 82. Histidine 92 contacts heme b. Cysteine 93 is subject to S-nitrosocysteine. An N6-acetyllysine modification is found at lysine 144.

This sequence belongs to the globin family. Heterotetramer of two alpha chains and two beta chains. In terms of tissue distribution, red blood cells.

Involved in oxygen transport from the lung to the various peripheral tissues. In Suncus murinus (Asian house shrew), this protein is Hemoglobin subunit beta (HBB).